The following is a 732-amino-acid chain: 1,4-alpha-glucan branching enzyme GlgB (732 aa).

The Nucleophile role is filled by D408. The active-site Proton donor is the E461.

Belongs to the glycosyl hydrolase 13 family. GlgB subfamily. Monomer.

The enzyme catalyses Transfers a segment of a (1-&gt;4)-alpha-D-glucan chain to a primary hydroxy group in a similar glucan chain.. It participates in glycan biosynthesis; glycogen biosynthesis. Functionally, catalyzes the formation of the alpha-1,6-glucosidic linkages in glycogen by scission of a 1,4-alpha-linked oligosaccharide from growing alpha-1,4-glucan chains and the subsequent attachment of the oligosaccharide to the alpha-1,6 position. This is 1,4-alpha-glucan branching enzyme GlgB from Rhodococcus jostii (strain RHA1).